The chain runs to 268 residues: Putative hydro-lyase Arad_8587 (268 aa).

Belongs to the D-glutamate cyclase family.

In Rhizobium rhizogenes (strain K84 / ATCC BAA-868) (Agrobacterium radiobacter), this protein is Putative hydro-lyase Arad_8587.